A 497-amino-acid chain; its full sequence is Virion host shutoff protein (497 aa).

Disordered stretches follow at residues 122–142 (EHDTEFQEDPEENDVSVPPQD) and 280–373 (SVIS…SAEA). Residues 309–326 (PNERRVISWRRQDDHDYD) show a composition bias toward basic and acidic residues. The segment covering 327–344 (SSTEDSDQSDSSEEEEEC) has biased composition (acidic residues).

This sequence belongs to the herpesviridae VHS protein family.

It localises to the virion. Its function is as follows. Minor structural protein that acts as an endoribonuclease during lytic infection. Degrades host mRNAs in the cytoplasm by cutting them at preferred sites, including some in regions of translation initiation. The chain is Virion host shutoff protein from Equine herpesvirus 1 (strain Ab4p) (EHV-1).